The primary structure comprises 367 residues: UDP-N-acetylglucosamine--N-acetylmuramyl-(pentapeptide) pyrophosphoryl-undecaprenol N-acetylglucosamine transferase (367 aa).

UDP-N-acetyl-alpha-D-glucosamine-binding positions include 15 to 17, asparagine 126, arginine 169, serine 197, and glutamine 298; that span reads TGG.

It belongs to the glycosyltransferase 28 family. MurG subfamily.

It localises to the cell inner membrane. It catalyses the reaction di-trans,octa-cis-undecaprenyl diphospho-N-acetyl-alpha-D-muramoyl-L-alanyl-D-glutamyl-meso-2,6-diaminopimeloyl-D-alanyl-D-alanine + UDP-N-acetyl-alpha-D-glucosamine = di-trans,octa-cis-undecaprenyl diphospho-[N-acetyl-alpha-D-glucosaminyl-(1-&gt;4)]-N-acetyl-alpha-D-muramoyl-L-alanyl-D-glutamyl-meso-2,6-diaminopimeloyl-D-alanyl-D-alanine + UDP + H(+). Its pathway is cell wall biogenesis; peptidoglycan biosynthesis. Its function is as follows. Cell wall formation. Catalyzes the transfer of a GlcNAc subunit on undecaprenyl-pyrophosphoryl-MurNAc-pentapeptide (lipid intermediate I) to form undecaprenyl-pyrophosphoryl-MurNAc-(pentapeptide)GlcNAc (lipid intermediate II). The chain is UDP-N-acetylglucosamine--N-acetylmuramyl-(pentapeptide) pyrophosphoryl-undecaprenol N-acetylglucosamine transferase from Bradyrhizobium sp. (strain ORS 278).